Reading from the N-terminus, the 621-residue chain is Myosin-binding protein C, slow-type (621 aa).

Ig-like C2-type domains lie at 1-53, 54-142, and 144-241; these read EEIV…VDLR, PLKI…HVID, and PKII…LWIS. Thr28 carries the post-translational modification Phosphothreonine. Ser233 carries the post-translational modification Phosphoserine. 3 Fibronectin type-III domains span residues 244 to 343, 344 to 459, and 556 to 621; these read LRLA…TSPP, TLLA…IEPP, and PPQA…VIGN. Thr420 carries the post-translational modification Phosphothreonine. Position 445 is a phosphotyrosine (Tyr445). Residues 459–553 form the Ig-like C2-type 4 domain; the sequence is PKIRIPRHLK…ASIDIQIVDR (95 aa).

It belongs to the immunoglobulin superfamily. MyBP family. Interacts with USP25 (isoform USP25m only); the interaction prevents proteasomal degradation of MYBPC1.

Thick filament-associated protein located in the crossbridge region of vertebrate striated muscle a bands. Slow skeletal protein that binds to both myosin and actin. In vitro, binds to native thin filaments and modifies the activity of actin-activated myosin ATPase. May modulate muscle contraction or may play a more structural role. The sequence is that of Myosin-binding protein C, slow-type (Mybpc1) from Rattus norvegicus (Rat).